A 902-amino-acid chain; its full sequence is Protein translocase subunit SecA (902 aa).

Residues Q89, 107–111, and D502 each bind ATP; that span reads GEGKT. Positions 884, 886, 895, and 896 each coordinate Zn(2+).

This sequence belongs to the SecA family. As to quaternary structure, monomer and homodimer. Part of the essential Sec protein translocation apparatus which comprises SecA, SecYEG and auxiliary proteins SecDF-YajC and YidC. Requires Zn(2+) as cofactor.

The protein localises to the cell inner membrane. It localises to the cytoplasm. The enzyme catalyses ATP + H2O + cellular proteinSide 1 = ADP + phosphate + cellular proteinSide 2.. Functionally, part of the Sec protein translocase complex. Interacts with the SecYEG preprotein conducting channel. Has a central role in coupling the hydrolysis of ATP to the transfer of proteins into and across the cell membrane, serving both as a receptor for the preprotein-SecB complex and as an ATP-driven molecular motor driving the stepwise translocation of polypeptide chains across the membrane. In Agrobacterium fabrum (strain C58 / ATCC 33970) (Agrobacterium tumefaciens (strain C58)), this protein is Protein translocase subunit SecA.